A 67-amino-acid polypeptide reads, in one-letter code: DNA-directed RNA polymerase subunit omega (67 aa).

The protein belongs to the RNA polymerase subunit omega family. As to quaternary structure, the RNAP catalytic core consists of 2 alpha, 1 beta, 1 beta' and 1 omega subunit. When a sigma factor is associated with the core the holoenzyme is formed, which can initiate transcription.

The catalysed reaction is RNA(n) + a ribonucleoside 5'-triphosphate = RNA(n+1) + diphosphate. Promotes RNA polymerase assembly. Latches the N- and C-terminal regions of the beta' subunit thereby facilitating its interaction with the beta and alpha subunits. In Exiguobacterium sibiricum (strain DSM 17290 / CCUG 55495 / CIP 109462 / JCM 13490 / 255-15), this protein is DNA-directed RNA polymerase subunit omega.